The primary structure comprises 388 residues: LL-diaminopimelate aminotransferase (388 aa).

Y15 and G40 together coordinate substrate. Pyridoxal 5'-phosphate contacts are provided by residues Y69, 103-104 (SK), Y128, N178, Y209, and 237-239 (SLS). Substrate is bound by residues K104, Y128, and N178. Residue K240 is modified to N6-(pyridoxal phosphate)lysine. A pyridoxal 5'-phosphate-binding site is contributed by R248. R366 contributes to the substrate binding site.

The protein belongs to the class-I pyridoxal-phosphate-dependent aminotransferase family. LL-diaminopimelate aminotransferase subfamily. Homodimer. Pyridoxal 5'-phosphate serves as cofactor.

It carries out the reaction (2S,6S)-2,6-diaminopimelate + 2-oxoglutarate = (S)-2,3,4,5-tetrahydrodipicolinate + L-glutamate + H2O + H(+). It participates in amino-acid biosynthesis; L-lysine biosynthesis via DAP pathway; LL-2,6-diaminopimelate from (S)-tetrahydrodipicolinate (aminotransferase route): step 1/1. In terms of biological role, involved in the synthesis of meso-diaminopimelate (m-DAP or DL-DAP), required for both lysine and peptidoglycan biosynthesis. Catalyzes the direct conversion of tetrahydrodipicolinate to LL-diaminopimelate. Can also use m-DAP instead of LL-DAP as the amino-group donor. The chain is LL-diaminopimelate aminotransferase from Syntrophobacter fumaroxidans (strain DSM 10017 / MPOB).